Here is a 71-residue protein sequence, read N- to C-terminus: UPF0435 protein BPUM_0734 (71 aa).

Belongs to the UPF0435 family.

The protein is UPF0435 protein BPUM_0734 of Bacillus pumilus (strain SAFR-032).